A 119-amino-acid polypeptide reads, in one-letter code: Ribonuclease P protein component (119 aa).

The protein belongs to the RnpA family. As to quaternary structure, consists of a catalytic RNA component (M1 or rnpB) and a protein subunit.

The catalysed reaction is Endonucleolytic cleavage of RNA, removing 5'-extranucleotides from tRNA precursor.. In terms of biological role, RNaseP catalyzes the removal of the 5'-leader sequence from pre-tRNA to produce the mature 5'-terminus. It can also cleave other RNA substrates such as 4.5S RNA. The protein component plays an auxiliary but essential role in vivo by binding to the 5'-leader sequence and broadening the substrate specificity of the ribozyme. In Escherichia coli O6:H1 (strain CFT073 / ATCC 700928 / UPEC), this protein is Ribonuclease P protein component.